The primary structure comprises 166 residues: UPF0304 protein VF_1794 (166 aa).

It belongs to the UPF0304 family.

The chain is UPF0304 protein VF_1794 from Aliivibrio fischeri (strain ATCC 700601 / ES114) (Vibrio fischeri).